A 372-amino-acid polypeptide reads, in one-letter code: Alanine racemase (372 aa).

Catalysis depends on K33, which acts as the Proton acceptor; specific for D-alanine. At K33 the chain carries N6-(pyridoxal phosphate)lysine. R131 contacts substrate. The Proton acceptor; specific for L-alanine role is filled by Y261. Position 309 (M309) interacts with substrate.

Belongs to the alanine racemase family. Pyridoxal 5'-phosphate serves as cofactor.

It catalyses the reaction L-alanine = D-alanine. It participates in amino-acid biosynthesis; D-alanine biosynthesis; D-alanine from L-alanine: step 1/1. Catalyzes the interconversion of L-alanine and D-alanine. May also act on other amino acids. This Salinispora arenicola (strain CNS-205) protein is Alanine racemase (alr).